A 952-amino-acid chain; its full sequence is Bifunctional ent-kaurene synthase (952 aa).

A DXDD B-type cyclization motif motif is present at residues 328–331; that stretch reads DVDD. Mg(2+) is bound by residues Asp-668, Glu-672, Asn-848, Asp-849, Ser-852, and Asp-856. The DEXXE A-type cyclization motif motif lies at 668–672; sequence DEYME.

It belongs to the terpene synthase family. It depends on Mg(2+) as a cofactor.

It carries out the reaction ent-copalyl diphosphate = ent-kaur-16-ene + diphosphate. It catalyses the reaction (2E,6E,10E)-geranylgeranyl diphosphate = ent-copalyl diphosphate. It participates in plant hormone biosynthesis; gibberellin biosynthesis. Its function is as follows. Bifunctional ent-kaurene synthase; part of the gene cluster that mediates the biosynthesis of gibberellins (GAs), diterpenoids that may provide a selective advantage during infection of the preferred host plant, rice. Gibberellins (GAs) are diterpenoids and are synthesized via the mevalonate pathway. Biosynthesis of the major metabolite GA3 (gibberellic acid) from geranylgeranyl diphosphate (GGPP) requires 13 steps. The GGPP produced by the geranylgeranyl diphosphate synthase GGS2 is converted to ent-kaurene via ent-copalyldiphosphate in a two-step cyclization reaction performed by the bifunctional ent-copalyl diphosphate synthase/ent-kaurene synthase enzyme (CPS/KS). Ent-Kaurene is metabolized to GAs by a series of oxidation reactions catalyzed by cytochrome P450 monooxygenases. Cytochrome P450 monooxygenase P450-4 is an ent-kaurene oxidase that catalyzes the three oxidation steps between ent-kaurene and ent-kaurenoic acid. The highly multifunctional cytochrome P450 monooxygenase P450-1 then catalyzes four steps involving oxidation at two carbon atoms, in the main pathway from ent-kaurenoic acid to GA14 via GA12-aldehyde as well as producing kaurenolides and fujenoic acids as by-products. The cytochrome P450 monooxygenase P450-2 then converts GA14 to GA4 by removal of C-20. GA4 is further converted to GA7 by the GA4 desaturase DES via 1,2-desaturation before cytochrome P450 monooxygenase P450-3, a 13-hydroxylase, hydroxylates GA7 to GA3, the final product of the GA-biosynthetic pathway. This Gibberella fujikuroi (strain CBS 195.34 / IMI 58289 / NRRL A-6831) (Bakanae and foot rot disease fungus) protein is Bifunctional ent-kaurene synthase.